We begin with the raw amino-acid sequence, 994 residues long: Cation-chloride cotransporter 2 (994 aa).

Residues M1–R28 form a disordered region. The Cytoplasmic segment spans residues M1–L139. A helical transmembrane segment spans residues D140–I160. Topologically, residues R161–S174 are extracellular. Residues L175–I195 traverse the membrane as a helical segment. The Cytoplasmic portion of the chain corresponds to A196 to S221. Residues I222–V242 form a helical membrane-spanning segment. The Extracellular portion of the chain corresponds to E243–Q287. N-linked (GlcNAc...) asparagine glycans are attached at residues N268 and N274. A helical membrane pass occupies residues V288–I308. Residues N309–V311 are Cytoplasmic-facing. A helical transmembrane segment spans residues A312–I332. The Extracellular segment spans residues A333–S372. 3 N-linked (GlcNAc...) asparagine glycosylation sites follow: N337, N353, and N370. The helical transmembrane segment at I373–A393 threads the bilayer. The Cytoplasmic segment spans residues G394 to T412. The chain crosses the membrane as a helical span at residues L413–L433. Over S434–A448 the chain is Extracellular. Residues V449 to A469 traverse the membrane as a helical segment. At L470–V505 the chain is on the cytoplasmic side. The chain crosses the membrane as a helical span at residues A506 to I526. The Extracellular segment spans residues T527–T529. A helical membrane pass occupies residues I530–D552. Topologically, residues A553 to P558 are cytoplasmic. The helical transmembrane segment at R559 to M579 threads the bilayer. The Extracellular portion of the chain corresponds to F580–T585. A helical membrane pass occupies residues F586–K606. The Cytoplasmic portion of the chain corresponds to A607–T994.

It belongs to the SLC12A transporter family.

It localises to the membrane. Functionally, probable cation/chloride cotransporter. This Oryza sativa subsp. japonica (Rice) protein is Cation-chloride cotransporter 2 (CCC2).